Consider the following 809-residue polypeptide: Trimethylamine-N-oxide reductase 2 (809 aa).

Residues 1-31 (MTLTRREFIKHSGIAAGALVVTSAAPLPAWA) constitute a signal peptide (tat-type signal). Residue Ser176 participates in Mo-bis(molybdopterin guanine dinucleotide) binding.

Belongs to the prokaryotic molybdopterin-containing oxidoreductase family. Mo-bis(molybdopterin guanine dinucleotide) is required as a cofactor. Post-translationally, predicted to be exported by the Tat system. The position of the signal peptide cleavage has not been experimentally proven.

It localises to the periplasm. It carries out the reaction trimethylamine + 2 Fe(III)-[cytochrome c] + H2O = trimethylamine N-oxide + 2 Fe(II)-[cytochrome c] + 3 H(+). Functionally, reduces trimethylamine-N-oxide (TMAO) into trimethylamine; an anaerobic reaction coupled to energy-yielding reactions. Can also reduce other N- and S-oxide compounds such as 4-methylmorpholine-N-oxide and biotin sulfoxide (BSO), but with a lower catalytic efficiency. The protein is Trimethylamine-N-oxide reductase 2 (torZ) of Escherichia coli O157:H7.